Here is a 121-residue protein sequence, read N- to C-terminus: Small ribosomal subunit protein uS13 (121 aa).

Positions 94-121 (GLPLRGQRTRTNARTRKGPRRAAQSLKK) are disordered.

Belongs to the universal ribosomal protein uS13 family. Part of the 30S ribosomal subunit. Forms a loose heterodimer with protein S19. Forms two bridges to the 50S subunit in the 70S ribosome.

Located at the top of the head of the 30S subunit, it contacts several helices of the 16S rRNA. In the 70S ribosome it contacts the 23S rRNA (bridge B1a) and protein L5 of the 50S subunit (bridge B1b), connecting the 2 subunits; these bridges are implicated in subunit movement. Contacts the tRNAs in the A and P-sites. The sequence is that of Small ribosomal subunit protein uS13 from Paraburkholderia phymatum (strain DSM 17167 / CIP 108236 / LMG 21445 / STM815) (Burkholderia phymatum).